We begin with the raw amino-acid sequence, 310 residues long: Transcription factor LRL2 (310 aa).

Low complexity-rich tracts occupy residues 1–20 (MNSS…LQSP) and 104–126 (QTQT…QPQT). Disordered stretches follow at residues 1–23 (MNSS…PATF) and 95–143 (FHLP…PHSI). The segment at 136-149 (QATDPHSIAERLRR) is basic motif; degenerate. A bHLH domain is found at 136–185 (QATDPHSIAERLRRERIAERMKSLQELVPNGNKTDKASMLDEIIDYVKFL). Positions 150–185 (ERIAERMKSLQELVPNGNKTDKASMLDEIIDYVKFL) are helix-loop-helix motif. The tract at residues 203-225 (ASSQISEDAGGSHENTSSSGEAK) is disordered.

Homodimer. In terms of tissue distribution, expressed constitutively in roots, leaves, stems, and flowers.

Its subcellular location is the nucleus. Functionally, transcription factor that regulates the development of root hairs. Transcription factor that regulates the development of sperm cells. The polypeptide is Transcription factor LRL2 (Arabidopsis thaliana (Mouse-ear cress)).